The chain runs to 256 residues: Pimeloyl-[acyl-carrier protein] methyl ester esterase (256 aa).

In terms of domain architecture, AB hydrolase-1 spans 15–242 (HLVLLHGWGL…AAHAPFISHP (228 aa)). Substrate is bound by residues tryptophan 22, 82–83 (SL), and 143–147 (FLALQ). Serine 82 functions as the Nucleophile in the catalytic mechanism. Catalysis depends on residues aspartate 207 and histidine 235. Histidine 235 lines the substrate pocket.

It belongs to the AB hydrolase superfamily. Carboxylesterase BioH family. Monomer.

The protein localises to the cytoplasm. The catalysed reaction is 6-carboxyhexanoyl-[ACP] methyl ester + H2O = 6-carboxyhexanoyl-[ACP] + methanol + H(+). It functions in the pathway cofactor biosynthesis; biotin biosynthesis. Its function is as follows. The physiological role of BioH is to remove the methyl group introduced by BioC when the pimeloyl moiety is complete. It allows to synthesize pimeloyl-ACP via the fatty acid synthetic pathway through the hydrolysis of the ester bonds of pimeloyl-ACP esters. This Escherichia coli O6:H1 (strain CFT073 / ATCC 700928 / UPEC) protein is Pimeloyl-[acyl-carrier protein] methyl ester esterase.